Consider the following 372-residue polypeptide: Queuine tRNA-ribosyltransferase (372 aa).

Asp92 acts as the Proton acceptor in catalysis. Substrate is bound by residues 92 to 96 (DSGGF), Asp146, Gln188, and Gly215. The tract at residues 246–252 (GIGTLRE) is RNA binding. Asp265 serves as the catalytic Nucleophile. The tract at residues 270 to 274 (TRLGR) is RNA binding; important for wobble base 34 recognition. Residues Cys303, Cys305, Cys308, and His334 each coordinate Zn(2+).

It belongs to the queuine tRNA-ribosyltransferase family. In terms of assembly, homodimer. Within each dimer, one monomer is responsible for RNA recognition and catalysis, while the other monomer binds to the replacement base PreQ1. Zn(2+) serves as cofactor.

The catalysed reaction is 7-aminomethyl-7-carbaguanine + guanosine(34) in tRNA = 7-aminomethyl-7-carbaguanosine(34) in tRNA + guanine. The protein operates within tRNA modification; tRNA-queuosine biosynthesis. In terms of biological role, catalyzes the base-exchange of a guanine (G) residue with the queuine precursor 7-aminomethyl-7-deazaguanine (PreQ1) at position 34 (anticodon wobble position) in tRNAs with GU(N) anticodons (tRNA-Asp, -Asn, -His and -Tyr). Catalysis occurs through a double-displacement mechanism. The nucleophile active site attacks the C1' of nucleotide 34 to detach the guanine base from the RNA, forming a covalent enzyme-RNA intermediate. The proton acceptor active site deprotonates the incoming PreQ1, allowing a nucleophilic attack on the C1' of the ribose to form the product. After dissociation, two additional enzymatic reactions on the tRNA convert PreQ1 to queuine (Q), resulting in the hypermodified nucleoside queuosine (7-(((4,5-cis-dihydroxy-2-cyclopenten-1-yl)amino)methyl)-7-deazaguanosine). The chain is Queuine tRNA-ribosyltransferase from Prochlorococcus marinus (strain MIT 9303).